The following is a 407-amino-acid chain: Geranylgeranyl diphosphate reductase (407 aa).

This sequence belongs to the geranylgeranyl reductase family. ChlP subfamily.

The enzyme catalyses phytyl diphosphate + 3 NADP(+) = geranylgeranyl diphosphate + 3 NADPH + 3 H(+). It participates in porphyrin-containing compound metabolism; chlorophyll biosynthesis. Its function is as follows. Catalyzes the stepwise hydrogenation of geranylgeraniol to phytol during chlorophyll A (ChlA) biosynthesis. This chain is Geranylgeranyl diphosphate reductase (chlP), found in Synechocystis sp. (strain ATCC 27184 / PCC 6803 / Kazusa).